Reading from the N-terminus, the 438-residue chain is Trigger factor (438 aa).

One can recognise a PPIase FKBP-type domain in the interval 160 to 245 (DDKVTIDFVG…VKKIQQAELP (86 aa)).

It belongs to the FKBP-type PPIase family. Tig subfamily.

It is found in the cytoplasm. The catalysed reaction is [protein]-peptidylproline (omega=180) = [protein]-peptidylproline (omega=0). Involved in protein export. Acts as a chaperone by maintaining the newly synthesized protein in an open conformation. Functions as a peptidyl-prolyl cis-trans isomerase. This Francisella tularensis subsp. holarctica (strain OSU18) protein is Trigger factor.